The following is a 352-amino-acid chain: Protein-glutamate methylesterase/protein-glutamine glutaminase (352 aa).

One can recognise a Response regulatory domain in the interval 5–123 (RILIVDDSVI…SKEKAIEYIR (119 aa)). D56 bears the 4-aspartylphosphate mark. In terms of domain architecture, CheB-type methylesterase spans 166–352 (EIVAIGVSTG…LAEEIIRRIG (187 aa)). Catalysis depends on residues S173, H200, and D296.

Belongs to the CheB family. In terms of processing, phosphorylated by CheA. Phosphorylation of the N-terminal regulatory domain activates the methylesterase activity.

It is found in the cytoplasm. The enzyme catalyses [protein]-L-glutamate 5-O-methyl ester + H2O = L-glutamyl-[protein] + methanol + H(+). It catalyses the reaction L-glutaminyl-[protein] + H2O = L-glutamyl-[protein] + NH4(+). In terms of biological role, involved in chemotaxis. Part of a chemotaxis signal transduction system that modulates chemotaxis in response to various stimuli. Catalyzes the demethylation of specific methylglutamate residues introduced into the chemoreceptors (methyl-accepting chemotaxis proteins or MCP) by CheR. Also mediates the irreversible deamidation of specific glutamine residues to glutamic acid. This is Protein-glutamate methylesterase/protein-glutamine glutaminase from Trichodesmium erythraeum (strain IMS101).